A 119-amino-acid polypeptide reads, in one-letter code: Hydrogenase maturation factor HypA (119 aa).

Residue H2 participates in Ni(2+) binding. Zn(2+) is bound by residues C73, C76, C89, and C92.

The protein belongs to the HypA/HybF family.

Involved in the maturation of [NiFe] hydrogenases. Required for nickel insertion into the metal center of the hydrogenase. This Dehalococcoides mccartyi (strain CBDB1) protein is Hydrogenase maturation factor HypA.